A 282-amino-acid polypeptide reads, in one-letter code: MEMO1 family protein Msed_2139 (282 aa).

It belongs to the MEMO1 family.

This is MEMO1 family protein Msed_2139 from Metallosphaera sedula (strain ATCC 51363 / DSM 5348 / JCM 9185 / NBRC 15509 / TH2).